We begin with the raw amino-acid sequence, 357 residues long: Inositol-tetrakisphosphate 1-kinase 3 (357 aa).

1D-myo-inositol 1,3,4-trisphosphate is bound by residues Lys56 and Lys98. The ATP site is built by Arg133 and Lys183. Residues His190 and Lys222 each contribute to the 1D-myo-inositol 1,3,4-trisphosphate site. ATP is bound by residues 211 to 222, Ser237, and Ser262; that span reads QEFVNHGGVLFK. Mg(2+) is bound by residues Asp302, Asp317, and Asn319. A 1D-myo-inositol 1,3,4-trisphosphate-binding site is contributed by Asn319.

The protein belongs to the ITPK1 family. As to quaternary structure, monomer. It depends on Mg(2+) as a cofactor.

It carries out the reaction 1D-myo-inositol 3,4,5,6-tetrakisphosphate + ATP = 1D-myo-inositol 1,3,4,5,6-pentakisphosphate + ADP + H(+). The enzyme catalyses 1D-myo-inositol 1,3,4-trisphosphate + ATP = 1D-myo-inositol 1,3,4,5-tetrakisphosphate + ADP + H(+). The catalysed reaction is 1D-myo-inositol 1,3,4-trisphosphate + ATP = 1D-myo-inositol 1,3,4,6-tetrakisphosphate + ADP + H(+). Kinase that can phosphorylate various inositol polyphosphate such as Ins(3,4,5,6)P4 or Ins(1,3,4)P3 and participates in phytic acid biosynthesis in developing seeds. Phytic acid is the primary storage form of phosphorus in cereal grains and other plant seeds. This Oryza sativa subsp. indica (Rice) protein is Inositol-tetrakisphosphate 1-kinase 3 (ITPK3).